Here is a 403-residue protein sequence, read N- to C-terminus: Alkaline protease 1 (403 aa).

Positions 1-21 (MLSIKRTLLLLGAVLPAVFGA) are cleaved as a signal peptide. A propeptide spanning residues 22-125 (PVQETRRAAQ…QIWYIDALTT (104 aa)) is cleaved from the precursor. One can recognise an Inhibitor I9 domain in the interval 36–120 (KYIVTFKPGT…HVEEDQIWYI (85 aa)). In terms of domain architecture, Peptidase S8 spans 130–403 (PWGLGSISHK…PNKLAYNGNA (274 aa)). Active-site charge relay system residues include D162 and H193. 2 N-linked (GlcNAc...) asparagine glycosylation sites follow: N253 and N307. The Charge relay system role is filled by S349.

The protein belongs to the peptidase S8 family.

It localises to the secreted. The enzyme catalyses Hydrolysis of proteins with broad specificity, and of Bz-Arg-OEt &gt; Ac-Tyr-OEt. Does not hydrolyze peptide amides.. Secreted alkaline protease that allows assimilation of proteinaceous substrates. The chain is Alkaline protease 1 (alp1) from Neosartorya fischeri (strain ATCC 1020 / DSM 3700 / CBS 544.65 / FGSC A1164 / JCM 1740 / NRRL 181 / WB 181) (Aspergillus fischerianus).